Reading from the N-terminus, the 1406-residue chain is EF-hand calcium-binding domain-containing protein 5 (1406 aa).

The segment at 255-655 (NKDLPQQQRD…KACEPKPQHV (401 aa)) is disordered. Composition is skewed to polar residues over residues 258–294 (LPQQ…SLTG), 322–334 (RRSS…QQRG), 342–354 (RRSS…QQRG), 362–373 (RRSSTVEQTRQR), 382–393 (RRSSTVEQTQRR), 402–414 (RRSS…QQRG), 422–434 (RRSS…QQRG), and 442–464 (RRSS…SLPE). Positions 465 to 477 (QESHRGSITEGSH) are enriched in basic and acidic residues. The segment covering 501 to 513 (DDSGSAGSRRGSG) has biased composition (low complexity). Acidic residues predominate over residues 564 to 577 (QELDEDSTPQLEDD). Composition is skewed to basic and acidic residues over residues 578-598 (SALK…EEKP) and 638-655 (SKRD…PQHV). Positions 773 to 808 (RRRILLQAIFEKWDNDGSGFLDLNEVDDLLYTYKEG) constitute an EF-hand domain. Ca(2+)-binding residues include aspartate 786, aspartate 788, serine 790, and glutamate 797.

This Mus musculus (Mouse) protein is EF-hand calcium-binding domain-containing protein 5 (Efcab5).